The primary structure comprises 300 residues: Putative zinc finger protein 705EP (300 aa).

One can recognise a KRAB domain in the interval 7 to 78; the sequence is VTFEDVAIDF…GREFLQDQNP (72 aa). The C2H2-type 1; degenerate zinc finger occupies 172–194; it reads YQCNLCEKAYTNCFHLRRPKMTH. 2 consecutive C2H2-type zinc fingers follow at residues 200 to 222 and 228 to 250; these read YTCH…EKTH and YKCH…ERTH. The C2H2-type 4; degenerate zinc finger occupies 256–278; it reads YECDNSGKAFSQSSGFRGNKIIH.

This sequence belongs to the krueppel C2H2-type zinc-finger protein family.

Its subcellular location is the nucleus. Its function is as follows. May be involved in transcriptional regulation. The polypeptide is Putative zinc finger protein 705EP (Homo sapiens (Human)).